The primary structure comprises 218 residues: 3,4-dihydroxy-2-butanone 4-phosphate synthase (218 aa).

Residues 38-39, Asp43, 151-155, and Glu175 each bind D-ribulose 5-phosphate; these read RE and RRGHT. Glu39 is a Mg(2+) binding site. His154 serves as a coordination point for Mg(2+).

The protein belongs to the DHBP synthase family. In terms of assembly, homodimer. Mg(2+) is required as a cofactor. Requires Mn(2+) as cofactor.

The catalysed reaction is D-ribulose 5-phosphate = (2S)-2-hydroxy-3-oxobutyl phosphate + formate + H(+). The protein operates within cofactor biosynthesis; riboflavin biosynthesis; 2-hydroxy-3-oxobutyl phosphate from D-ribulose 5-phosphate: step 1/1. Functionally, catalyzes the conversion of D-ribulose 5-phosphate to formate and 3,4-dihydroxy-2-butanone 4-phosphate. The polypeptide is 3,4-dihydroxy-2-butanone 4-phosphate synthase (Vibrio cholerae serotype O1 (strain M66-2)).